Here is a 681-residue protein sequence, read N- to C-terminus: NADH-quinone oxidoreductase subunit G (681 aa).

The 2Fe-2S ferredoxin-type domain maps to 1-78; it reads MIKLTIDGQE…GMVIHTDTPM (78 aa). The [2Fe-2S] cluster site is built by cysteine 34, cysteine 45, cysteine 48, and cysteine 62. A 4Fe-4S His(Cys)3-ligated-type domain is found at 78–117; sequence MVKKAREGVMEFLLVNHPLDCPICDQGGECDLQDQAFRYG. The [4Fe-4S] cluster site is built by histidine 94, cysteine 98, cysteine 101, cysteine 107, cysteine 146, cysteine 149, cysteine 152, and cysteine 196. The region spanning 215–271 is the 4Fe-4S Mo/W bis-MGD-type domain; the sequence is LRHTASIGVHDAEGSNIRIDSRGDEVMRVLPRVNEEINEEWLSDKNRFSYDGLKYQR.

Belongs to the complex I 75 kDa subunit family. [2Fe-2S] cluster serves as cofactor. [4Fe-4S] cluster is required as a cofactor.

It carries out the reaction a quinone + NADH + 5 H(+)(in) = a quinol + NAD(+) + 4 H(+)(out). NDH-1 shuttles electrons from NADH, via FMN and iron-sulfur (Fe-S) centers, to quinones in the respiratory chain. Couples the redox reaction to proton translocation (for every two electrons transferred, four hydrogen ions are translocated across the cytoplasmic membrane), and thus conserves the redox energy in a proton gradient. The protein is NADH-quinone oxidoreductase subunit G (nuoG) of Rickettsia bellii (strain RML369-C).